The following is a 247-amino-acid chain: Protein NipSnap homolog 3B (247 aa).

N6-succinyllysine is present on residues K45, K48, K57, and K166.

The protein belongs to the NipSnap family.

It is found in the cytoplasm. The protein localises to the cytosol. In Mus musculus (Mouse), this protein is Protein NipSnap homolog 3B (Nipsnap3b).